We begin with the raw amino-acid sequence, 260 residues long: Winged helix repair factor 1 (260 aa).

Winged helix domain stretches follow at residues Phe-38 to Met-110, Ser-126 to Pro-185, and Gly-186 to Thr-260.

The protein belongs to the STK19 family. Monomer in solution. Homodimer; when bound to DNA. Component of a transcription-coupled nucleotide excision repair (TC-NER) complex which assembles and interacts with the multiprotein RNA polymerase II complex when it stalls at DNA lesions.

Its subcellular location is the nucleus. Functionally, DNA-binding protein which is required for efficient transcription-coupled nucleotide excision repair (TC-NER). Acts as part of a TC-NER complex which assembles and interacts with RNA polymerase II (RNAPII) when it stalls at DNA lesions. The polypeptide is Winged helix repair factor 1 (Xenopus laevis (African clawed frog)).